A 264-amino-acid chain; its full sequence is Indolethylamine N-methyltransferase (264 aa).

An N6-succinyllysine modification is found at Lys14. Residues Tyr21, Tyr26, 64–65, Tyr70, Asp86, and Asn91 each bind S-adenosyl-L-methionine; that span reads GS. Lys97 is subject to N6-succinyllysine. S-adenosyl-L-methionine is bound by residues 143–144 and Phe164; that span reads DV.

Belongs to the class I-like SAM-binding methyltransferase superfamily. NNMT/PNMT/TEMT family. In terms of assembly, monomer. As to expression, detected in lung and liver (at protein level).

Its subcellular location is the cytoplasm. The catalysed reaction is a tertiary amine + S-adenosyl-L-methionine = a methylated tertiary amine + S-adenosyl-L-homocysteine + H(+). It catalyses the reaction a secondary amine + S-adenosyl-L-methionine = a methylated secondary amine + S-adenosyl-L-homocysteine + H(+). It carries out the reaction a primary amine + S-adenosyl-L-methionine = a methylated primary amine + S-adenosyl-L-homocysteine + H(+). The enzyme catalyses dimethyl sulfide + S-adenosyl-L-methionine = trimethylsulfonium + S-adenosyl-L-homocysteine. Inhibited by the S-adenosyl-L-methionine analog sinefungin and by the product S-adenosyl-L-homocysteine. Functionally, catalyzes the N-methylation of tryptamine and structurally related compounds. Functions as a thioether S-methyltransferase and is active with a variety of thioethers and the corresponding selenium and tellurium compounds, including 3-methylthiopropionaldehyde, dimethyl selenide, dimethyl telluride, 2-methylthioethylamine, 2-methylthioethanol, methyl-n-propyl sulfide and diethyl sulfide. Plays an important role in the detoxification of selenium compounds. This chain is Indolethylamine N-methyltransferase (Inmt), found in Mus musculus (Mouse).